The following is a 489-amino-acid chain: Betaine aldehyde dehydrogenase (489 aa).

Positions 26 and 93 each coordinate K(+). 150 to 152 (GAW) contributes to the NAD(+) binding site. Residue Lys-162 is the Charge relay system of the active site. 176-179 (KPSE) serves as a coordination point for NAD(+). Position 180 (Val-180) interacts with K(+). An NAD(+)-binding site is contributed by 229–232 (GVET). Leu-245 lines the K(+) pocket. The active-site Proton acceptor is Glu-251. Residues Gly-253, Cys-285, and Glu-386 each contribute to the NAD(+) site. Cys-285 (nucleophile) is an active-site residue. Cysteine sulfenic acid (-SOH) is present on Cys-285. 2 residues coordinate K(+): Lys-456 and Gly-459. Glu-463 functions as the Charge relay system in the catalytic mechanism.

It belongs to the aldehyde dehydrogenase family. Dimer of dimers. K(+) serves as cofactor.

It catalyses the reaction betaine aldehyde + NAD(+) + H2O = glycine betaine + NADH + 2 H(+). It functions in the pathway amine and polyamine biosynthesis; betaine biosynthesis via choline pathway; betaine from betaine aldehyde: step 1/1. Its function is as follows. Involved in the biosynthesis of the osmoprotectant glycine betaine. Catalyzes the irreversible oxidation of betaine aldehyde to the corresponding acid. The sequence is that of Betaine aldehyde dehydrogenase from Burkholderia lata (strain ATCC 17760 / DSM 23089 / LMG 22485 / NCIMB 9086 / R18194 / 383).